Reading from the N-terminus, the 275-residue chain is Putative rhamnulose-1-phosphate aldolase (275 aa).

Glutamate 117 is a catalytic residue. Residues histidine 141, histidine 143, and histidine 212 each coordinate Zn(2+).

Belongs to the aldolase class II family. RhaD subfamily. As to quaternary structure, homotetramer. It depends on Zn(2+) as a cofactor.

Its subcellular location is the cytoplasm. The catalysed reaction is L-rhamnulose 1-phosphate = (S)-lactaldehyde + dihydroxyacetone phosphate. It functions in the pathway carbohydrate degradation; L-rhamnose degradation; glycerone phosphate from L-rhamnose: step 3/3. Functionally, catalyzes the reversible cleavage of L-rhamnulose-1-phosphate to dihydroxyacetone phosphate (DHAP) and L-lactaldehyde. The polypeptide is Putative rhamnulose-1-phosphate aldolase (Salmonella typhi).